The sequence spans 111 residues: Universal stress protein B (111 aa).

Helical transmembrane passes span 1–21 (MIST…NMAR) and 90–110 (FILT…LMLW).

This sequence belongs to the universal stress protein B family.

It is found in the cell inner membrane. The protein is Universal stress protein B of Yersinia pseudotuberculosis serotype O:1b (strain IP 31758).